The chain runs to 170 residues: Large ribosomal subunit protein uL10 (170 aa).

This sequence belongs to the universal ribosomal protein uL10 family. In terms of assembly, part of the ribosomal stalk of the 50S ribosomal subunit. The N-terminus interacts with L11 and the large rRNA to form the base of the stalk. The C-terminus forms an elongated spine to which L12 dimers bind in a sequential fashion forming a multimeric L10(L12)X complex.

Its function is as follows. Forms part of the ribosomal stalk, playing a central role in the interaction of the ribosome with GTP-bound translation factors. This Nitratiruptor sp. (strain SB155-2) protein is Large ribosomal subunit protein uL10.